We begin with the raw amino-acid sequence, 697 residues long: Elongation factor G 2 (697 aa).

A tr-type G domain is found at 5-280 (SKYRNIGIFA…AVVDYLPAPN (276 aa)). GTP-binding positions include 14–21 (AHVDAGKT), 78–82 (DTPGH), and 132–135 (NKLD).

This sequence belongs to the TRAFAC class translation factor GTPase superfamily. Classic translation factor GTPase family. EF-G/EF-2 subfamily.

Its subcellular location is the cytoplasm. Its function is as follows. Catalyzes the GTP-dependent ribosomal translocation step during translation elongation. During this step, the ribosome changes from the pre-translocational (PRE) to the post-translocational (POST) state as the newly formed A-site-bound peptidyl-tRNA and P-site-bound deacylated tRNA move to the P and E sites, respectively. Catalyzes the coordinated movement of the two tRNA molecules, the mRNA and conformational changes in the ribosome. This is Elongation factor G 2 from Shewanella sp. (strain MR-4).